The primary structure comprises 135 residues: L-ectoine synthase (135 aa).

Belongs to the ectoine synthase family.

The enzyme catalyses (2S)-4-acetamido-2-aminobutanoate = L-ectoine + H2O. It functions in the pathway amine and polyamine biosynthesis; ectoine biosynthesis; L-ectoine from L-aspartate 4-semialdehyde: step 3/3. Catalyzes the circularization of gamma-N-acetyl-alpha,gamma-diaminobutyric acid (ADABA) to ectoine (1,4,5,6-tetrahydro-2-methyl-4-pyrimidine carboxylic acid), which is an excellent osmoprotectant. The sequence is that of L-ectoine synthase from Saccharopolyspora erythraea (strain ATCC 11635 / DSM 40517 / JCM 4748 / NBRC 13426 / NCIMB 8594 / NRRL 2338).